Here is a 500-residue protein sequence, read N- to C-terminus: Lariat debranching enzyme (500 aa).

Residues 1–25 (MSSKNPVDEQPCCGSHEGSHQDPAP) are disordered. Residues C48, H50, D79, and N124 each contribute to the a divalent metal cation site. Residues 164-194 (SGIFSQGDFQFSHYERPSFSERDVKSAYHVR) form a lariat recognition loop region. A divalent metal cation-binding residues include H222, H274, and H276. Positions 453-500 (DDANAKPNQDDVDFGDEDFVIDRGHTSDEPEAKKSRLDEDKFEAVPSE) are disordered. Acidic residues predominate over residues 462–471 (DDVDFGDEDF). A compositionally biased stretch (basic and acidic residues) spans 472–500 (VIDRGHTSDEPEAKKSRLDEDKFEAVPSE).

The protein belongs to the lariat debranching enzyme family. It depends on Fe(2+) as a cofactor. The cofactor is Zn(2+). Mn(2+) is required as a cofactor.

It localises to the nucleus. Its activity is regulated as follows. Active in presence of diverse metals including Fe(2+), Zn(2+), Mn(2+). Binds two metal cations in two adjacent alpha and beta metal-binding pockets. Functionally, cleaves the 2'-5' phosphodiester linkage at the branch point of lariat intron pre-mRNAs after splicing and converts them into linear molecules that are subsequently degraded. It thereby facilitates ribonucleotide turnover. This Caenorhabditis elegans protein is Lariat debranching enzyme.